The following is a 199-amino-acid chain: Recombination protein RecR (199 aa).

The segment at 57-72 (CQSCRTYTEESLCPIC) adopts a C4-type zinc-finger fold. The Toprim domain occupies 81–176 (STICVVETPA…VISRIAHGVP (96 aa)).

The protein belongs to the RecR family.

Functionally, may play a role in DNA repair. It seems to be involved in an RecBC-independent recombinational process of DNA repair. It may act with RecF and RecO. This is Recombination protein RecR from Shewanella sp. (strain MR-4).